Consider the following 79-residue polypeptide: Exodeoxyribonuclease 7 small subunit (79 aa).

Belongs to the XseB family. As to quaternary structure, heterooligomer composed of large and small subunits.

The protein resides in the cytoplasm. It catalyses the reaction Exonucleolytic cleavage in either 5'- to 3'- or 3'- to 5'-direction to yield nucleoside 5'-phosphates.. Its function is as follows. Bidirectionally degrades single-stranded DNA into large acid-insoluble oligonucleotides, which are then degraded further into small acid-soluble oligonucleotides. This is Exodeoxyribonuclease 7 small subunit from Haemophilus influenzae (strain PittGG).